Reading from the N-terminus, the 513-residue chain is MQLNSNEIAELIKQRIEKFEVTSEARNEGTIMSVQDGIIRIHGLADCLQGEMVELPGNRYAIALNLERDSVGAVVMGPYADLQEGTKVKSTGRILEVPVGEKLLGRVVNTLGQPIDGKGPIEADGYEPVEKIAPGVIERQSVDQPVQTGYKSIDSMIPVGRGQRELIIGDRQTGKTALAVDAIINQKDSGIKCVYVAIGQKNSTISAVVRKLEEHGAMENTIVVAASASESAALQYLAAYSGCTMGEYFRDRGEDALIVYDDLSKQAVAYRQISLLLRRPPGREAFPGDVFYLHSRLLERAARVNADYVEKFTDGKVKGQTGSLTALPIIETQAGDVSAFVPTNVISITDGQIFLETDLFNSGIRPAVNAGVSVSRVGGSAQTKIIKKLGGGIRLALAQYRELAAFAQFASDLDESTRSQLEHGQRVTELMKQKQYKPMSVAQMAVSIYAVEKGFLKDVEIDKIMDFEESLQSFMASEYAELMAEIDKTGNYNDDIDAQLKAALEKFKQTQSW.

Gly-169–Thr-176 contributes to the ATP binding site.

This sequence belongs to the ATPase alpha/beta chains family. As to quaternary structure, F-type ATPases have 2 components, CF(1) - the catalytic core - and CF(0) - the membrane proton channel. CF(1) has five subunits: alpha(3), beta(3), gamma(1), delta(1), epsilon(1). CF(0) has three main subunits: a(1), b(2) and c(9-12). The alpha and beta chains form an alternating ring which encloses part of the gamma chain. CF(1) is attached to CF(0) by a central stalk formed by the gamma and epsilon chains, while a peripheral stalk is formed by the delta and b chains.

Its subcellular location is the cell inner membrane. It carries out the reaction ATP + H2O + 4 H(+)(in) = ADP + phosphate + 5 H(+)(out). Functionally, produces ATP from ADP in the presence of a proton gradient across the membrane. The alpha chain is a regulatory subunit. This is ATP synthase subunit alpha from Idiomarina loihiensis (strain ATCC BAA-735 / DSM 15497 / L2-TR).